The primary structure comprises 88 residues: Gene 30 protein (88 aa).

The polypeptide is Gene 30 protein (30) (Mycobacterium (Mycobacteriophage D29)).